Here is a 158-residue protein sequence, read N- to C-terminus: MSLFDGKKVIIIGDRDGIPGPAIAECLKGTAAEVVYSATECFVUTAAGAMDLENQNRVKGFADQFGAENLVVLVGAAEAESAGLAAETVTAGDPTFAGPLAGVQLGLRVFHAVEPEFKDAVDSAVYDEQIGMMEMVLDVDSIIAEMKSIREQFGKFND.

Sec-44 is an active-site residue. Sec-44 is a non-standard amino acid (selenocysteine).

Belongs to the GrdA family. In terms of assembly, monomer. Component of the glycine, sarcosine and betaine reductase complexes, together with components B and C.

The catalysed reaction is acetyl phosphate + [thioredoxin]-disulfide + NH4(+) + H2O = [thioredoxin]-dithiol + glycine + phosphate + H(+). The enzyme catalyses acetyl phosphate + methylamine + [thioredoxin]-disulfide + H2O = sarcosine + [thioredoxin]-dithiol + phosphate + H(+). It carries out the reaction acetyl phosphate + trimethylamine + [thioredoxin]-disulfide + H2O = glycine betaine + [thioredoxin]-dithiol + phosphate + H(+). In terms of biological role, in the first step of glycine, betaine and sarcosine reductases, the substrate is bound to component PB via a Schiff base intermediate. Then the PB-activated substrate is nucleophilically attacked by the selenol anion of component PA to transform it to a carboxymethylated selenoether and the respective amine. By action of component PC, acetyl phosphate is formed, leaving component PA in its oxidized state. Finally component PA becomes reduced by the thioredoxin system to start a new catalytic cycle of reductive deamination. The polypeptide is Glycine/sarcosine/betaine reductase complex component A1 (grdA1) (Peptoclostridium acidaminophilum (Eubacterium acidaminophilum)).